The sequence spans 657 residues: Probable potassium transport system protein Kup (657 aa).

Helical transmembrane passes span 15-35 (SFLI…LYVM), 48-68 (ITPD…TLLT), 100-120 (WLII…MLTP), 147-167 (IIII…HFGT), 173-193 (IFGP…IVNL), 219-239 (LGFF…ALYS), 251-271 (LTWP…AAWI), 292-312 (MMPS…AIIA), 348-368 (IYMP…VLYF), 378-398 (YGLS…NYLL), 403-423 (PLPI…SFLI), and 431-451 (KGGF…YIWI).

The protein belongs to the HAK/KUP transporter (TC 2.A.72) family.

It localises to the cell membrane. It carries out the reaction K(+)(in) + H(+)(in) = K(+)(out) + H(+)(out). In terms of biological role, transport of potassium into the cell. Likely operates as a K(+):H(+) symporter. The chain is Probable potassium transport system protein Kup from Clostridium perfringens (strain SM101 / Type A).